Consider the following 894-residue polypeptide: Valine--tRNA ligase (894 aa).

Residues 48-58 (PNVTGFLHMGH) carry the 'HIGH' region motif. Residues 527-531 (KMSKS) carry the 'KMSKS' region motif. Residue Lys-530 participates in ATP binding. A coiled-coil region spans residues 827-852 (LVDFDEEVKRINKSIEKLTRDIGMLS).

The protein belongs to the class-I aminoacyl-tRNA synthetase family. ValS type 1 subfamily. In terms of assembly, monomer.

Its subcellular location is the cytoplasm. The catalysed reaction is tRNA(Val) + L-valine + ATP = L-valyl-tRNA(Val) + AMP + diphosphate. In terms of biological role, catalyzes the attachment of valine to tRNA(Val). As ValRS can inadvertently accommodate and process structurally similar amino acids such as threonine, to avoid such errors, it has a 'posttransfer' editing activity that hydrolyzes mischarged Thr-tRNA(Val) in a tRNA-dependent manner. The polypeptide is Valine--tRNA ligase (Bdellovibrio bacteriovorus (strain ATCC 15356 / DSM 50701 / NCIMB 9529 / HD100)).